Reading from the N-terminus, the 134-residue chain is Large ribosomal subunit protein eL14 (134 aa).

The protein belongs to the eukaryotic ribosomal protein eL14 family. As to quaternary structure, component of the large ribosomal subunit (LSU). Mature yeast ribosomes consist of a small (40S) and a large (60S) subunit. The 40S small subunit contains 1 molecule of ribosomal RNA (18S rRNA) and at least 33 different proteins. The large 60S subunit contains 3 rRNA molecules (25S, 5.8S and 5S rRNA) and at least 46 different proteins.

It localises to the cytoplasm. It is found in the nucleus. Its function is as follows. Component of the ribosome, a large ribonucleoprotein complex responsible for the synthesis of proteins in the cell. The small ribosomal subunit (SSU) binds messenger RNAs (mRNAs) and translates the encoded message by selecting cognate aminoacyl-transfer RNA (tRNA) molecules. The large subunit (LSU) contains the ribosomal catalytic site termed the peptidyl transferase center (PTC), which catalyzes the formation of peptide bonds, thereby polymerizing the amino acids delivered by tRNAs into a polypeptide chain. The nascent polypeptides leave the ribosome through a tunnel in the LSU and interact with protein factors that function in enzymatic processing, targeting, and the membrane insertion of nascent chains at the exit of the ribosomal tunnel. The sequence is that of Large ribosomal subunit protein eL14 (rpl14) from Schizosaccharomyces pombe (strain 972 / ATCC 24843) (Fission yeast).